Here is a 169-residue protein sequence, read N- to C-terminus: Hydroperoxy fatty acid reductase gpx1 (169 aa).

Cys41 is an active-site residue.

It belongs to the glutathione peroxidase family. Monomer.

It catalyses the reaction a hydroperoxy polyunsaturated fatty acid + NADPH + H(+) = a hydroxy polyunsaturated fatty acid + NADP(+) + H2O. Mercaptosuccinate, pCMB, and nethylmaleimide act as inhibitors of the catalytic activity. Hydroperoxy fatty acid reductase essential for the removal of lipid hydroperoxides under normal and stress conditions, leading to the protection of membrane integrity. The sequence is that of Hydroperoxy fatty acid reductase gpx1 (gpx1) from Synechocystis sp. (strain ATCC 27184 / PCC 6803 / Kazusa).